Here is a 259-residue protein sequence, read N- to C-terminus: Undecaprenyl-diphosphatase (259 aa).

A run of 7 helical transmembrane segments spans residues 1–21 (MEIFKVIFLGIIQGLTEFLPI), 40–60 (QITLDVFLHFGTVIPVLIIFW), 75–95 (WLTILILVGIIPTGIIGILFE), 101–121 (LFSSVKTVGFMLLVTGFLLYL), 179–199 (SFLLSAPVIFGAGLVELKDAL), 206–226 (LTWLSIIIGTIFAALSGYFAI), and 239–259 (TVFAYYCWIVGIMIIILAGIF).

Belongs to the UppP family.

The protein resides in the cell inner membrane. It carries out the reaction di-trans,octa-cis-undecaprenyl diphosphate + H2O = di-trans,octa-cis-undecaprenyl phosphate + phosphate + H(+). Catalyzes the dephosphorylation of undecaprenyl diphosphate (UPP). Confers resistance to bacitracin. The chain is Undecaprenyl-diphosphatase from Halothermothrix orenii (strain H 168 / OCM 544 / DSM 9562).